The chain runs to 371 residues: Chaperone protein DnaJ (371 aa).

A J domain is found at 5–69 (DYYEVLGLSK…QKRAQYDQFG (65 aa)). Residues 133-215 (GKELNVEIPV…CHGSGKVRKR (83 aa)) form a CR-type zinc finger. Zn(2+) contacts are provided by cysteine 146, cysteine 149, cysteine 163, cysteine 166, cysteine 189, cysteine 192, cysteine 203, and cysteine 206. CXXCXGXG motif repeat units lie at residues 146–153 (CDTCKGSG), 163–170 (CKHCSGSG), 189–196 (CGHCSGTG), and 203–210 (CTTCHGSG).

This sequence belongs to the DnaJ family. In terms of assembly, homodimer. Zn(2+) serves as cofactor.

It localises to the cytoplasm. Functionally, participates actively in the response to hyperosmotic and heat shock by preventing the aggregation of stress-denatured proteins and by disaggregating proteins, also in an autonomous, DnaK-independent fashion. Unfolded proteins bind initially to DnaJ; upon interaction with the DnaJ-bound protein, DnaK hydrolyzes its bound ATP, resulting in the formation of a stable complex. GrpE releases ADP from DnaK; ATP binding to DnaK triggers the release of the substrate protein, thus completing the reaction cycle. Several rounds of ATP-dependent interactions between DnaJ, DnaK and GrpE are required for fully efficient folding. Also involved, together with DnaK and GrpE, in the DNA replication of plasmids through activation of initiation proteins. The polypeptide is Chaperone protein DnaJ (Bacillus cereus (strain ATCC 10987 / NRS 248)).